The chain runs to 343 residues: Flagellar motor switch protein FliG (343 aa).

A Part of the EHPQR-motif motif is present at residues 137–140 (EHPQ). The short motif at 245–248 (MFTF) is the M-F-X-F motif; its intrinsic flexibility is probably coupled to flagellar rotation element.

It belongs to the FliG family.

The protein resides in the cell inner membrane. The protein localises to the bacterial flagellum basal body. Functionally, one of the proteins that forms a switch complex that is proposed to be located at the base of the basal body. This complex interacts with chemotaxis proteins (such as CheY) in addition to contacting components of the motor that determine the direction of flagellar rotation. Required for flagellum synthesis and motility. In H.pylori four flagellar switch proteins are encoded, FliG, FliM, FliN and FliY. This chain is Flagellar motor switch protein FliG, found in Helicobacter pylori (strain ATCC 700392 / 26695) (Campylobacter pylori).